The chain runs to 354 residues: Putative F-box/kelch-repeat protein At5g03000 (354 aa).

The F-box domain occupies 37-86; that stretch reads PTVFSSLPDELILNCLARVSRFYRPSLSLVNKEFQSLIASPDLEATRSRI. 2 Kelch repeats span residues 143-189 and 190-236; these read EIYI…VIDG and KIYV…FPGK.

The polypeptide is Putative F-box/kelch-repeat protein At5g03000 (Arabidopsis thaliana (Mouse-ear cress)).